The chain runs to 371 residues: RNA polymerase sigma factor SigA (371 aa).

The tract at residues 137 to 207 (LAEANLRLVV…TRAIADQART (71 aa)) is sigma-70 factor domain-2. Positions 161–164 (DLIQ) match the Interaction with polymerase core subunit RpoC motif. A sigma-70 factor domain-3 region spans residues 216 to 292 (ETINKLVREQ…DEVIENPVDY (77 aa)). The sigma-70 factor domain-4 stretch occupies residues 305–358 (VLDTLTDREENVLRLRFGLDDGKMRTLEDVGKVFDVTRERIRQIEAKALRKLRH). The H-T-H motif DNA-binding region spans 331–350 (LEDVGKVFDVTRERIRQIEA).

Belongs to the sigma-70 factor family. RpoD/SigA subfamily. As to quaternary structure, interacts transiently with the RNA polymerase catalytic core.

It is found in the cytoplasm. Functionally, sigma factors are initiation factors that promote the attachment of RNA polymerase to specific initiation sites and are then released. This sigma factor is the primary sigma factor during exponential growth. The chain is RNA polymerase sigma factor SigA from Streptococcus mutans serotype c (strain ATCC 700610 / UA159).